Consider the following 127-residue polypeptide: Holo-[acyl-carrier-protein] synthase (127 aa).

2 residues coordinate Mg(2+): Asp9 and Glu58.

Belongs to the P-Pant transferase superfamily. AcpS family. It depends on Mg(2+) as a cofactor.

The protein localises to the cytoplasm. The catalysed reaction is apo-[ACP] + CoA = holo-[ACP] + adenosine 3',5'-bisphosphate + H(+). Its function is as follows. Transfers the 4'-phosphopantetheine moiety from coenzyme A to a Ser of acyl-carrier-protein. The chain is Holo-[acyl-carrier-protein] synthase from Shewanella baltica (strain OS223).